The primary structure comprises 104 residues: Large ribosomal subunit protein uL24 (104 aa).

Belongs to the universal ribosomal protein uL24 family. As to quaternary structure, part of the 50S ribosomal subunit.

Functionally, one of two assembly initiator proteins, it binds directly to the 5'-end of the 23S rRNA, where it nucleates assembly of the 50S subunit. Its function is as follows. One of the proteins that surrounds the polypeptide exit tunnel on the outside of the subunit. The sequence is that of Large ribosomal subunit protein uL24 from Hydrogenovibrio crunogenus (strain DSM 25203 / XCL-2) (Thiomicrospira crunogena).